Consider the following 492-residue polypeptide: Probable proline dehydrogenase, mitochondrial (492 aa).

This sequence belongs to the proline oxidase family. FAD is required as a cofactor.

The protein localises to the mitochondrion. It catalyses the reaction L-proline + a quinone = (S)-1-pyrroline-5-carboxylate + a quinol + H(+). Converts proline to delta-1-pyrroline-5-carboxylate. The polypeptide is Probable proline dehydrogenase, mitochondrial (Schizosaccharomyces pombe (strain 972 / ATCC 24843) (Fission yeast)).